Reading from the N-terminus, the 160-residue chain is Deoxyuridine 5'-triphosphate nucleotidohydrolase (160 aa).

Residues 79–81, N92, 96–98, and K106 contribute to the substrate site; these read RSG and TVD.

Belongs to the dUTPase family. The cofactor is Mg(2+).

The enzyme catalyses dUTP + H2O = dUMP + diphosphate + H(+). It functions in the pathway pyrimidine metabolism; dUMP biosynthesis; dUMP from dCTP (dUTP route): step 2/2. In terms of biological role, this enzyme is involved in nucleotide metabolism: it produces dUMP, the immediate precursor of thymidine nucleotides and it decreases the intracellular concentration of dUTP so that uracil cannot be incorporated into DNA. The protein is Deoxyuridine 5'-triphosphate nucleotidohydrolase of Sinorhizobium medicae (strain WSM419) (Ensifer medicae).